The primary structure comprises 205 residues: MIGKLKGVIDEIAEDHAVIDVHGVGYVAFCSARTLGNLGGAGEAAILFIETYVREDMIRLYGFATQLEREWFRLLQNVQGVGAKVALAVLGTLSPSELANAIALRDIAMVSRAPGVGKKVAERIVTELKNKAPAFAGEASGTIGLKQELGAGAAPAPVADAVSALSNLGYSRDQAANAVAAALKETGEGADSAKLIRLGLKELSQ.

Positions 1–64 (MIGKLKGVID…EDMIRLYGFA (64 aa)) are domain I. The tract at residues 65 to 143 (TQLEREWFRL…AFAGEASGTI (79 aa)) is domain II. The segment at 144-152 (GLKQELGAG) is flexible linker. Residues 153–205 (AAPAPVADAVSALSNLGYSRDQAANAVAAALKETGEGADSAKLIRLGLKELSQ) are domain III.

This sequence belongs to the RuvA family. As to quaternary structure, homotetramer. Forms an RuvA(8)-RuvB(12)-Holliday junction (HJ) complex. HJ DNA is sandwiched between 2 RuvA tetramers; dsDNA enters through RuvA and exits via RuvB. An RuvB hexamer assembles on each DNA strand where it exits the tetramer. Each RuvB hexamer is contacted by two RuvA subunits (via domain III) on 2 adjacent RuvB subunits; this complex drives branch migration. In the full resolvosome a probable DNA-RuvA(4)-RuvB(12)-RuvC(2) complex forms which resolves the HJ.

It is found in the cytoplasm. In terms of biological role, the RuvA-RuvB-RuvC complex processes Holliday junction (HJ) DNA during genetic recombination and DNA repair, while the RuvA-RuvB complex plays an important role in the rescue of blocked DNA replication forks via replication fork reversal (RFR). RuvA specifically binds to HJ cruciform DNA, conferring on it an open structure. The RuvB hexamer acts as an ATP-dependent pump, pulling dsDNA into and through the RuvAB complex. HJ branch migration allows RuvC to scan DNA until it finds its consensus sequence, where it cleaves and resolves the cruciform DNA. In Brucella abortus (strain S19), this protein is Holliday junction branch migration complex subunit RuvA.